The sequence spans 189 residues: Putative manganese efflux pump MntP (189 aa).

Transmembrane regions (helical) follow at residues L3 to G23, L41 to A61, I65 to I85, F104 to G124, I132 to L152, and I167 to L187.

The protein belongs to the MntP (TC 9.B.29) family.

It localises to the cell inner membrane. In terms of biological role, probably functions as a manganese efflux pump. In Yersinia pseudotuberculosis serotype O:1b (strain IP 31758), this protein is Putative manganese efflux pump MntP.